The sequence spans 211 residues: FMN-dependent NADH:quinone oxidoreductase 3 (211 aa).

An FMN-binding site is contributed by 17–19; that stretch reads SFS.

The protein belongs to the azoreductase type 1 family. In terms of assembly, homodimer. Requires FMN as cofactor.

It carries out the reaction 2 a quinone + NADH + H(+) = 2 a 1,4-benzosemiquinone + NAD(+). The enzyme catalyses N,N-dimethyl-1,4-phenylenediamine + anthranilate + 2 NAD(+) = 2-(4-dimethylaminophenyl)diazenylbenzoate + 2 NADH + 2 H(+). Quinone reductase that provides resistance to thiol-specific stress caused by electrophilic quinones. In terms of biological role, also exhibits azoreductase activity. Catalyzes the reductive cleavage of the azo bond in aromatic azo compounds to the corresponding amines. The chain is FMN-dependent NADH:quinone oxidoreductase 3 from Halalkalibacterium halodurans (strain ATCC BAA-125 / DSM 18197 / FERM 7344 / JCM 9153 / C-125) (Bacillus halodurans).